The chain runs to 103 residues: Integration host factor subunit alpha (103 aa).

A disordered region spans residues 55 to 74 (CREKPQRPGRNPKTGEEMPI).

Belongs to the bacterial histone-like protein family. In terms of assembly, heterodimer of an alpha and a beta chain.

This protein is one of the two subunits of integration host factor, a specific DNA-binding protein that functions in genetic recombination as well as in transcriptional and translational control. In Thiobacillus denitrificans (strain ATCC 25259 / T1), this protein is Integration host factor subunit alpha.